The chain runs to 127 residues: UPF0102 protein Gura_3756 (127 aa).

This sequence belongs to the UPF0102 family.

In Geotalea uraniireducens (strain Rf4) (Geobacter uraniireducens), this protein is UPF0102 protein Gura_3756.